Reading from the N-terminus, the 1140-residue chain is Rho GTPase-activating protein gacF (1140 aa).

Disordered regions lie at residues 1–145 (MKTH…KPSR), 189–236 (ESDI…IEPI), 455–504 (INNN…STSF), 520–644 (EVQQ…GLES), 661–700 (ESSK…DEDE), 720–759 (ETND…NNIS), 773–927 (AKVT…STLS), and 952–1095 (TSSP…NHTN). Low complexity-rich tracts occupy residues 10-26 (LGGL…LKSF) and 35-71 (QQQQ…ASSS). Positions 28–55 (TEEVIHEQQQQQQQHNNNNNNNNNHQRQ) form a coiled coil. The segment covering 72–82 (IEETSGYLSKT) has biased composition (polar residues). Low complexity-rich tracts occupy residues 83–136 (SSSS…TSSP) and 193–222 (DNGS…SSSS). One can recognise a Rho-GAP domain in the interval 234 to 409 (EPISQSTEDY…RLIENYHSIF (176 aa)). 2 stretches are compositionally biased toward low complexity: residues 456–475 (NNNS…SPYK) and 482–493 (PKSSPKLNNRNS). Polar residues predominate over residues 494–504 (ISPKLSSSTSF). The stretch at 517–548 (ISDEVQQEQQNQQQQQDEQQDEQQDEQQDEQQ) forms a coiled coil. Residues 520–533 (EVQQEQQNQQQQQD) are compositionally biased toward low complexity. Residues 534 to 549 (EQQDEQQDEQQDEQQD) are compositionally biased toward acidic residues. The span at 550–566 (EQNSNSTSINTSSSSIT) shows a compositional bias: low complexity. Over residues 572–596 (STVQYLNRINTCRRPSSWTNNNRIK) the composition is skewed to polar residues. Residues 597 to 606 (QQQHHHHHHQ) show a composition bias toward basic residues. Low complexity predominate over residues 607–631 (QQQQHQQHQQQQSSSSESNSSLTSS). 2 stretches are compositionally biased toward polar residues: residues 632 to 641 (PQKRLNSVNG) and 672 to 684 (NRQM…NNIG). The segment covering 724-759 (DNNNNDQINNSNSSNNIPKTTITTTTNNTTTTNNIS) has biased composition (low complexity). Positions 773–796 (AKVTPTPTPAPMQTSSFLSTKQTN) are enriched in polar residues. Residues 797 to 822 (SPSSSSSPSSTVSSTSSSPSSSLSSS) are compositionally biased toward low complexity. Polar residues predominate over residues 823 to 854 (IDNKTMSNVNYNRFQPANRTVSSPNVRNFSVP). 3 stretches are compositionally biased toward low complexity: residues 891–914 (KPKN…NSTP), 952–1058 (TSSP…TSST), and 1065–1079 (HSNS…SSSS).

It is found in the cytoplasm. In terms of biological role, rho GTPase-activating protein involved in the signal transduction pathway. This Dictyostelium discoideum (Social amoeba) protein is Rho GTPase-activating protein gacF (gacF).